The primary structure comprises 334 residues: Glyceraldehyde-3-phosphate dehydrogenase (334 aa).

Residues 10-11 (RI), aspartate 33, lysine 77, and threonine 119 each bind NAD(+). Residues 149–151 (SCT), threonine 180, 209–210 (TG), and arginine 232 each bind D-glyceraldehyde 3-phosphate. Cysteine 150 acts as the Nucleophile in catalysis. Asparagine 314 contacts NAD(+).

It belongs to the glyceraldehyde-3-phosphate dehydrogenase family. As to quaternary structure, homotetramer.

Its subcellular location is the cytoplasm. It catalyses the reaction D-glyceraldehyde 3-phosphate + phosphate + NAD(+) = (2R)-3-phospho-glyceroyl phosphate + NADH + H(+). It functions in the pathway carbohydrate degradation; glycolysis; pyruvate from D-glyceraldehyde 3-phosphate: step 1/5. In terms of biological role, catalyzes the oxidative phosphorylation of glyceraldehyde 3-phosphate (G3P) to 1,3-bisphosphoglycerate (BPG) using the cofactor NAD. The first reaction step involves the formation of a hemiacetal intermediate between G3P and a cysteine residue, and this hemiacetal intermediate is then oxidized to a thioester, with concomitant reduction of NAD to NADH. The reduced NADH is then exchanged with the second NAD, and the thioester is attacked by a nucleophilic inorganic phosphate to produce BPG. This Chlamydia trachomatis serovar L2 (strain ATCC VR-902B / DSM 19102 / 434/Bu) protein is Glyceraldehyde-3-phosphate dehydrogenase (gap).